The sequence spans 2028 residues: Protein Daple (2028 aa).

A Calponin-homology (CH) domain is found at 11–131 (LFLQSPLVTW…KVLLLVLGCA (121 aa)). The tract at residues 222 to 250 (AQHPPSPIKSSSADSTPSPTSSLSSEDKQ) is disordered. Phosphoserine is present on residues Ser-227 and Ser-239. Positions 229–245 (IKSSSADSTPSPTSSLS) are enriched in low complexity. 4 coiled-coil regions span residues 247–428 (EDKQ…SMNE), 456–1017 (ELNE…QGEG), 1045–1094 (HKEA…SSQI), and 1139–1393 (LQNH…DQYK). Position 486 is a phosphoserine (Ser-486). Residues 1011-1024 (RQNQGEGQHLQNSF) show a composition bias toward polar residues. A disordered region spans residues 1011 to 1043 (RQNQGEGQHLQNSFKHPAGKTAASHQGKEAWGP). The segment covering 1419 to 1428 (KEGSRERLKS) has biased composition (basic and acidic residues). 2 disordered regions span residues 1419-1724 (KEGS…GAKM) and 1736-1803 (AAPT…SLSR). Composition is skewed to low complexity over residues 1439-1450 (SSDPASPAASQP), 1517-1534 (SRTCSTSATTTAPSNSTP), and 1568-1588 (SRPSSLESSRNTSSNSSPLNL). Ser-1444 carries the post-translational modification Phosphoserine. Residues 1589–1604 (KGSSEQLHGRSESFSS) show a composition bias toward polar residues. Residue Ser-1601 is modified to Phosphoserine. The GBA motif lies at 1661–1691 (CSASPSSEMVTLEEFLEESNRSSPTHDTPSC). Over residues 1689 to 1704 (PSCRDDLLSDYFRKAS) the composition is skewed to basic and acidic residues. Residues 1792–1803 (HAPASRSASLSR) are compositionally biased toward low complexity. At Ser-1806 the chain carries Phosphoserine. Positions 1816 to 2021 (SGPEACKQES…PEPGGDPQTV (206 aa)) are disordered. Over residues 1842–1855 (SHTLQSPAPPSSHS) the composition is skewed to polar residues. Residues 1879-1897 (RPLDTRRFSLAPPKEERLA) show a composition bias toward basic and acidic residues. Positions 1902–1924 (SATAPAIATAGAGAAAAGSGSNS) are enriched in low complexity. The residue at position 1954 (Thr-1954) is a Phosphothreonine. The PDZ-binding signature appears at 2025–2028 (YGCV). The segment at 2026-2028 (GCV) is DVL1-binding.

The protein belongs to the CCDC88 family. In terms of assembly, homooligomer. Interacts with DVL1 (via PDZ domain); dissociates following initiation of non-canonical Wnt signaling. Interacts (via C-terminus) with ligand-activated Wnt receptor FZD7; competes with DVL1 for binding to FZD7 and displaces DVL1 from ligand-activated FZD7. Interacts (via GBA motif) with guanine nucleotide-binding protein G(i) alpha subunits GNAI1, GNAI2 and GNAI3 (inactive GDP-bound form); interacts with higher affinity with GNAI1 and GNAI3 than with GNAI2 and interaction leads to G(i) alpha subunit activation. Does not interact with GNAO1.

Its subcellular location is the cytoplasm. It is found in the cell junction. In terms of biological role, required for activation of guanine nucleotide-binding proteins (G-proteins) during non-canonical Wnt signaling. Binds to ligand-activated Wnt receptor FZD7, displacing DVL1 from the FZD7 receptor and leading to inhibition of canonical Wnt signaling. Acts as a non-receptor guanine nucleotide exchange factor by also binding to guanine nucleotide-binding protein G(i) alpha (Gi-alpha) subunits, leading to their activation. Binding to Gi-alpha subunits displaces the beta and gamma subunits from the heterotrimeric G-protein complex, triggering non-canonical Wnt responses such as activation of RAC1 and PI3K-AKT signaling. Promotes apical constriction of cells via ARHGEF18. This is Protein Daple (CCDC88C) from Homo sapiens (Human).